The chain runs to 214 residues: tRNA (guanine-N(7)-)-methyltransferase (214 aa).

Positions 43, 68, 95, and 117 each coordinate S-adenosyl-L-methionine. Aspartate 117 is an active-site residue. Substrate contacts are provided by residues lysine 121, aspartate 153, and 190–193; that span reads TEYE.

This sequence belongs to the class I-like SAM-binding methyltransferase superfamily. TrmB family.

The enzyme catalyses guanosine(46) in tRNA + S-adenosyl-L-methionine = N(7)-methylguanosine(46) in tRNA + S-adenosyl-L-homocysteine. It functions in the pathway tRNA modification; N(7)-methylguanine-tRNA biosynthesis. Catalyzes the formation of N(7)-methylguanine at position 46 (m7G46) in tRNA. This chain is tRNA (guanine-N(7)-)-methyltransferase, found in Staphylococcus aureus (strain COL).